A 271-amino-acid polypeptide reads, in one-letter code: Putative pyruvate, phosphate dikinase regulatory protein (271 aa).

Residue 147–154 (GLSRTSKT) coordinates ADP.

Belongs to the pyruvate, phosphate/water dikinase regulatory protein family. PDRP subfamily.

It catalyses the reaction N(tele)-phospho-L-histidyl/L-threonyl-[pyruvate, phosphate dikinase] + ADP = N(tele)-phospho-L-histidyl/O-phospho-L-threonyl-[pyruvate, phosphate dikinase] + AMP + H(+). It carries out the reaction N(tele)-phospho-L-histidyl/O-phospho-L-threonyl-[pyruvate, phosphate dikinase] + phosphate + H(+) = N(tele)-phospho-L-histidyl/L-threonyl-[pyruvate, phosphate dikinase] + diphosphate. Bifunctional serine/threonine kinase and phosphorylase involved in the regulation of the pyruvate, phosphate dikinase (PPDK) by catalyzing its phosphorylation/dephosphorylation. The protein is Putative pyruvate, phosphate dikinase regulatory protein of Clostridium tetani (strain Massachusetts / E88).